Reading from the N-terminus, the 378-residue chain is Mannitol-1-phosphate 5-dehydrogenase (378 aa).

S4–G15 is an NAD(+) binding site.

It belongs to the mannitol dehydrogenase family.

It carries out the reaction D-mannitol 1-phosphate + NAD(+) = beta-D-fructose 6-phosphate + NADH + H(+). The protein is Mannitol-1-phosphate 5-dehydrogenase of Streptococcus pneumoniae (strain 70585).